We begin with the raw amino-acid sequence, 89 residues long: Small ribosomal subunit protein uS19 (89 aa).

It belongs to the universal ribosomal protein uS19 family.

Functionally, protein S19 forms a complex with S13 that binds strongly to the 16S ribosomal RNA. The chain is Small ribosomal subunit protein uS19 from Xanthomonas campestris pv. campestris (strain 8004).